Here is a 1127-residue protein sequence, read N- to C-terminus: Testis-expressed protein 2 (1127 aa).

Disordered stretches follow at residues 1-27 (MTSL…HVQR) and 133-279 (AVSP…SFFK). Over residues 133–187 (AVSPGSSSSGPLASSPSVSSLSEQKTSSSSPLSSPSKSPILSSSASTSTLSSAKP) the composition is skewed to low complexity. Ser-196 is subject to Phosphoserine. Positions 249–275 (QFTQPRNTGGDSKTAPSSPLTSPSDTR) are enriched in polar residues. Position 262 is a phosphothreonine (Thr-262). A phosphoserine mark is found at Ser-265, Ser-266, Ser-270, and Ser-295. Asn-330 carries N-linked (GlcNAc...) asparagine glycosylation. The segment at 348-386 (EEECDSEGDGYGSDSNIPRSDHPKSTGEPTREIELKSSQ) is disordered. Over residues 366-382 (RSDHPKSTGEPTREIEL) the composition is skewed to basic and acidic residues. 2 helical membrane passes run 475–495 (TLGF…PHYV) and 497–517 (GLFL…WFFT). Disordered regions lie at residues 648 to 685 (KAQT…QRDQ), 715 to 764 (KKSS…QKEL), 786 to 816 (QESR…PPSE), and 947 to 980 (DEES…GYVG). Positions 650–670 (QTDKETSEEKPPAEGSEDPKK) are enriched in basic and acidic residues. Ser-732, Ser-738, Ser-744, Ser-748, Ser-751, Ser-798, and Ser-815 each carry phosphoserine. Positions 735 to 750 (NSPSGHLTHSRSSSKG) are enriched in polar residues. The span at 787–804 (ESRSPQRSPLQSAESSPT) shows a compositional bias: polar residues. One can recognise an SMP-LTD domain in the interval 816–1101 (EEEEQEAWVN…MPNMDDVYIT (286 aa)). Acidic residues predominate over residues 947–962 (DEESSSAGSSEEDDAP).

It localises to the endoplasmic reticulum membrane. Its subcellular location is the nucleus membrane. During endoplasmic reticulum (ER) stress or when cellular ceramide levels increase, may induce contacts between the ER and medial-Golgi complex to facilitate non-vesicular transport of ceramides from the ER to the Golgi complex where they are converted to complex sphingolipids, preventing toxic ceramide accumulation. The sequence is that of Testis-expressed protein 2 (TEX2) from Homo sapiens (Human).